The chain runs to 155 residues: DNA gyrase inhibitor (155 aa).

The protein belongs to the DNA gyrase inhibitor family. In terms of assembly, interacts with DNA gyrase.

Its subcellular location is the cytoplasm. Its function is as follows. Inhibits the supercoiling activity of DNA gyrase. Acts by inhibiting DNA gyrase at an early step, prior to (or at the step of) binding of DNA by the gyrase. It protects cells against toxins that target DNA gyrase, by inhibiting activity of these toxins and reducing the formation of lethal double-strand breaks in the cell. This Salmonella typhi protein is DNA gyrase inhibitor.